Consider the following 239-residue polypeptide: Small ribosomal subunit protein uS3c (239 aa).

The region spanning Ile43–Lys139 is the KH type-2 domain. The segment at Asn50 to Met74 is disordered.

It belongs to the universal ribosomal protein uS3 family. Part of the 30S ribosomal subunit.

The protein resides in the plastid. Its subcellular location is the chloroplast. The polypeptide is Small ribosomal subunit protein uS3c (rps3) (Triticum aestivum (Wheat)).